We begin with the raw amino-acid sequence, 247 residues long: Adenosylcobinamide-GDP ribazoletransferase (247 aa).

The next 6 membrane-spanning stretches (helical) occupy residues 34–54 (IVTF…VFVA), 59–79 (CGIP…TGGF), 113–133 (GGLA…ELAL), 138–158 (MLAA…LLMY), 171–193 (VFIG…ILAA), and 194–214 (ILMP…AIFI).

This sequence belongs to the CobS family. Requires Mg(2+) as cofactor.

The protein resides in the cell inner membrane. The catalysed reaction is alpha-ribazole + adenosylcob(III)inamide-GDP = adenosylcob(III)alamin + GMP + H(+). It catalyses the reaction alpha-ribazole 5'-phosphate + adenosylcob(III)inamide-GDP = adenosylcob(III)alamin 5'-phosphate + GMP + H(+). It participates in cofactor biosynthesis; adenosylcobalamin biosynthesis; adenosylcobalamin from cob(II)yrinate a,c-diamide: step 7/7. Its function is as follows. Joins adenosylcobinamide-GDP and alpha-ribazole to generate adenosylcobalamin (Ado-cobalamin). Also synthesizes adenosylcobalamin 5'-phosphate from adenosylcobinamide-GDP and alpha-ribazole 5'-phosphate. The sequence is that of Adenosylcobinamide-GDP ribazoletransferase from Citrobacter koseri (strain ATCC BAA-895 / CDC 4225-83 / SGSC4696).